The following is a 124-amino-acid chain: S-adenosylmethionine decarboxylase proenzyme (124 aa).

The active-site Schiff-base intermediate with substrate; via pyruvic acid is the serine 63. Serine 63 carries the pyruvic acid (Ser); by autocatalysis modification. Histidine 68 (proton acceptor; for processing activity) is an active-site residue. The active-site Proton donor; for catalytic activity is the cysteine 83.

This sequence belongs to the prokaryotic AdoMetDC family. Type 1 subfamily. Heterotetramer of two alpha and two beta chains arranged as a dimer of alpha/beta heterodimers. It depends on pyruvate as a cofactor. Post-translationally, is synthesized initially as an inactive proenzyme. Formation of the active enzyme involves a self-maturation process in which the active site pyruvoyl group is generated from an internal serine residue via an autocatalytic post-translational modification. Two non-identical subunits are generated from the proenzyme in this reaction, and the pyruvate is formed at the N-terminus of the alpha chain, which is derived from the carboxyl end of the proenzyme. The post-translation cleavage follows an unusual pathway, termed non-hydrolytic serinolysis, in which the side chain hydroxyl group of the serine supplies its oxygen atom to form the C-terminus of the beta chain, while the remainder of the serine residue undergoes an oxidative deamination to produce ammonia and the pyruvoyl group blocking the N-terminus of the alpha chain.

It catalyses the reaction S-adenosyl-L-methionine + H(+) = S-adenosyl 3-(methylsulfanyl)propylamine + CO2. It participates in amine and polyamine biosynthesis; S-adenosylmethioninamine biosynthesis; S-adenosylmethioninamine from S-adenosyl-L-methionine: step 1/1. In terms of biological role, catalyzes the decarboxylation of S-adenosylmethionine to S-adenosylmethioninamine (dcAdoMet), the propylamine donor required for the synthesis of the polyamines spermine and spermidine from the diamine putrescine. This is S-adenosylmethionine decarboxylase proenzyme from Geobacillus sp. (strain WCH70).